Here is a 317-residue protein sequence, read N- to C-terminus: Ferrochelatase (317 aa).

Fe cation contacts are provided by His192 and Glu271.

The protein belongs to the ferrochelatase family.

The protein localises to the cytoplasm. It carries out the reaction heme b + 2 H(+) = protoporphyrin IX + Fe(2+). The protein operates within porphyrin-containing compound metabolism; protoheme biosynthesis; protoheme from protoporphyrin-IX: step 1/1. Catalyzes the ferrous insertion into protoporphyrin IX. The protein is Ferrochelatase of Geobacter metallireducens (strain ATCC 53774 / DSM 7210 / GS-15).